The primary structure comprises 51 residues: Large ribosomal subunit protein bL33 (51 aa).

Belongs to the bacterial ribosomal protein bL33 family.

The sequence is that of Large ribosomal subunit protein bL33 from Alteromonas mediterranea (strain DSM 17117 / CIP 110805 / LMG 28347 / Deep ecotype).